A 231-amino-acid chain; its full sequence is GFP-like fluorescent chromoprotein FP538 (231 aa).

Phe-65 is modified (phenylalanine amide; atypical). The segment at residues 66–68 (KYG) is a cross-link (2-tetrahydro-2-pyridyl-5-imidazolinone (Lys-Gly)). Tyr-67 bears the 2,3-didehydrotyrosine mark.

It belongs to the GFP family. As to quaternary structure, homotetramer. In terms of processing, contains a chromophore consisting of modified amino acid residues. The chromophore is formed by autocatalytic backbone condensation between Xaa-N and Gly-(N+2), and oxidation of Tyr-(N+1) to didehydrotyrosine. In addition, the residue N lysine undergoes cyclization. The alpha-amino nitrogen is replaced by the epsilon-amino nitrogen, the peptide chain is broken, residue N-1 is released as an amide, and a double bond is formed between the alpha-carbon and the nitrogen so that a tetrahydropyridine ring results. Maturation of the chromophore requires nothing other than molecular oxygen. As to expression, tentacle and oral disk.

Pigment protein that is yellow in color. The chain is GFP-like fluorescent chromoprotein FP538 from Zoanthus sp. (Green polyp).